Consider the following 163-residue polypeptide: Myosin light chain 2 (163 aa).

2 EF-hand domains span residues 15 to 50 (DYIN…LGKT) and 92 to 127 (PERE…AGFE). Positions 28, 30, 32, and 39 each coordinate Ca(2+).

Interacts with the IQ domain of MYO1.

The protein localises to the bud neck. Functionally, regulatory light chain for the class II conventional myosin MYO1. May play a role in the disassembly of the MYO1 ring at the bud neck at the end of its contraction during cytokinesis. This Saccharomyces cerevisiae (strain ATCC 204508 / S288c) (Baker's yeast) protein is Myosin light chain 2 (MLC2).